The sequence spans 420 residues: 3-phosphoshikimate 1-carboxyvinyltransferase (420 aa).

3 residues coordinate 3-phosphoshikimate: Lys20, Ser21, and Arg25. Lys20 serves as a coordination point for phosphoenolpyruvate. A phosphoenolpyruvate-binding site is contributed by Arg119. Residues Ser161, Ser162, Gln163, Ser189, Asp303, Gln326, and Lys330 each coordinate 3-phosphoshikimate. Gln163 contacts phosphoenolpyruvate. The Proton acceptor role is filled by Asp303. Positions 334, 375, and 400 each coordinate phosphoenolpyruvate.

This sequence belongs to the EPSP synthase family. In terms of assembly, monomer.

The protein resides in the cytoplasm. The catalysed reaction is 3-phosphoshikimate + phosphoenolpyruvate = 5-O-(1-carboxyvinyl)-3-phosphoshikimate + phosphate. Its pathway is metabolic intermediate biosynthesis; chorismate biosynthesis; chorismate from D-erythrose 4-phosphate and phosphoenolpyruvate: step 6/7. Catalyzes the transfer of the enolpyruvyl moiety of phosphoenolpyruvate (PEP) to the 5-hydroxyl of shikimate-3-phosphate (S3P) to produce enolpyruvyl shikimate-3-phosphate and inorganic phosphate. The polypeptide is 3-phosphoshikimate 1-carboxyvinyltransferase (Dehalococcoides mccartyi (strain ATCC BAA-2100 / JCM 16839 / KCTC 5957 / BAV1)).